We begin with the raw amino-acid sequence, 419 residues long: MKTSLRTLSVALAAALVSPSVLAIEKIDFHGYMRAGVGVSSDGGLAEWQKTMVGRLGNESDTYGEIGLGAEVYKKEDVSFYLDSMVSMLSDGSNDSETTIGDDAQFGLRQLNLQIKGLIPGDKEAVIWGGKRYYQRHDLHIIDTKYWNISGSGAGIENYTVGPGAVSVAWVRGDANDVDTRITGDSDVNINYIDVRYAGFKPWAGSWTEVGIDYAMPNPTKQQKEYGGLYDADNAVMLTGEISQDMFGGYNKLVLQYANKGLAQNMISQGGGWYDMWHKTDEAKGYRVINTGLIPITDKFSFNHVLTWGSANDITEYTDKTNLISLVGRAQYQFTQYVRAIGEVGGFYQKDTYHNGSNYKQGGEKYTIALGLAEGPDFLSRPELRVFASYLNDSENGKPFEDGTSNDTWNFGVQVEAWW.

A signal peptide spans 1-23; it reads MKTSLRTLSVALAAALVSPSVLA.

The protein belongs to the porin LamB (TC 1.B.3) family. In terms of assembly, homotrimer formed of three 18-stranded antiparallel beta-barrels, containing three independent channels.

The protein localises to the cell outer membrane. The catalysed reaction is beta-maltose(in) = beta-maltose(out). Involved in the transport of maltose and maltodextrins. The protein is Maltoporin 2 of Yersinia pestis bv. Antiqua (strain Antiqua).